The primary structure comprises 141 residues: Hemoglobin subunit alpha (141 aa).

The region spanning 1–141 (VLSPADKTNI…VSTVLTSKYR (141 aa)) is the Globin domain. A Phosphoserine modification is found at S3. Residue K7 is modified to N6-succinyllysine. A Phosphothreonine modification is found at T8. K11 carries the N6-succinyllysine modification. K16 bears the N6-acetyllysine; alternate mark. K16 carries the post-translational modification N6-succinyllysine; alternate. Residue Y24 is modified to Phosphotyrosine. S35 is subject to Phosphoserine. K40 carries the N6-succinyllysine modification. S49 carries the post-translational modification Phosphoserine. Residue H58 participates in O2 binding. H87 is a binding site for heme b. Position 102 is a phosphoserine (S102). T108 is subject to Phosphothreonine. At S124 the chain carries Phosphoserine. Residues T134 and T137 each carry the phosphothreonine modification. Position 138 is a phosphoserine (S138).

This sequence belongs to the globin family. In terms of assembly, heterotetramer of two alpha chains and two beta chains. In terms of tissue distribution, red blood cells.

Involved in oxygen transport from the lung to the various peripheral tissues. In terms of biological role, hemopressin acts as an antagonist peptide of the cannabinoid receptor CNR1. Hemopressin-binding efficiently blocks cannabinoid receptor CNR1 and subsequent signaling. The chain is Hemoglobin subunit alpha (HBA) from Chrysocyon brachyurus (Maned wolf).